The sequence spans 506 residues: Probable Xaa-Pro aminopeptidase BDCG_04966 (506 aa).

Mn(2+)-binding residues include Asp-285, Asp-296, Glu-433, and Glu-471.

Belongs to the peptidase M24B family. The cofactor is Mn(2+).

The enzyme catalyses Release of any N-terminal amino acid, including proline, that is linked to proline, even from a dipeptide or tripeptide.. Its function is as follows. Catalyzes the removal of a penultimate prolyl residue from the N-termini of peptides. The chain is Probable Xaa-Pro aminopeptidase BDCG_04966 from Ajellomyces dermatitidis (strain ER-3 / ATCC MYA-2586) (Blastomyces dermatitidis).